Reading from the N-terminus, the 152-residue chain is Nucleoside diphosphate kinase (152 aa).

Positions 11, 59, 87, 93, 104, and 114 each coordinate ATP. Histidine 117 serves as the catalytic Pros-phosphohistidine intermediate.

The protein belongs to the NDK family. Homotetramer. Mg(2+) is required as a cofactor.

The protein localises to the cytoplasm. The catalysed reaction is a 2'-deoxyribonucleoside 5'-diphosphate + ATP = a 2'-deoxyribonucleoside 5'-triphosphate + ADP. The enzyme catalyses a ribonucleoside 5'-diphosphate + ATP = a ribonucleoside 5'-triphosphate + ADP. Major role in the synthesis of nucleoside triphosphates other than ATP. The ATP gamma phosphate is transferred to the NDP beta phosphate via a ping-pong mechanism, using a phosphorylated active-site intermediate. This chain is Nucleoside diphosphate kinase, found in Prochlorococcus marinus (strain MIT 9215).